We begin with the raw amino-acid sequence, 423 residues long: Isovaleryl-CoA dehydrogenase, mitochondrial (423 aa).

The transit peptide at 1–29 (MATATRLLGWRVASWRMRPPPAGFVSQRA) directs the protein to the mitochondrion. Residues K55, K64, and K75 each carry the N6-acetyllysine; alternate modification. An N6-succinyllysine; alternate mark is found at K55, K64, and K75. Residues 162–171 (LAMSEPNAGS) and 195–197 (WIT) contribute to the FAD site. S171 serves as a coordination point for substrate. 219 to 220 (SR) is a substrate binding site. K238 is subject to N6-acetyllysine. K259 carries the N6-acetyllysine; alternate modification. K259 is subject to N6-succinyllysine; alternate. Substrate-binding positions include Y274 and 281-284 (DLER). E283 serves as the catalytic Proton acceptor. FAD is bound at residue R309. Residue K315 is modified to N6-succinyllysine. Residues Q320 and 377 to 381 (QCFGG) contribute to the FAD site. Residue 404–405 (AG) participates in substrate binding. 406–408 (TSE) provides a ligand contact to FAD.

It belongs to the acyl-CoA dehydrogenase family. In terms of assembly, homotetramer. FAD serves as cofactor.

It is found in the mitochondrion matrix. The catalysed reaction is 3-methylbutanoyl-CoA + oxidized [electron-transfer flavoprotein] + H(+) = 3-methylbut-2-enoyl-CoA + reduced [electron-transfer flavoprotein]. The enzyme catalyses pentanoyl-CoA + oxidized [electron-transfer flavoprotein] + H(+) = (2E)-pentenoyl-CoA + reduced [electron-transfer flavoprotein]. It catalyses the reaction hexanoyl-CoA + oxidized [electron-transfer flavoprotein] + H(+) = (2E)-hexenoyl-CoA + reduced [electron-transfer flavoprotein]. It carries out the reaction butanoyl-CoA + oxidized [electron-transfer flavoprotein] + H(+) = (2E)-butenoyl-CoA + reduced [electron-transfer flavoprotein]. It functions in the pathway amino-acid degradation; L-leucine degradation; (S)-3-hydroxy-3-methylglutaryl-CoA from 3-isovaleryl-CoA: step 1/3. Catalyzes the conversion of isovaleryl-CoA/3-methylbutanoyl-CoA to 3-methylbut-2-enoyl-CoA as an intermediate step in the leucine (Leu) catabolic pathway. To a lesser extent, is also able to catalyze the oxidation of other saturated short-chain acyl-CoA thioesters as pentanoyl-CoA, hexenoyl-CoA and butenoyl-CoA. This is Isovaleryl-CoA dehydrogenase, mitochondrial (IVD) from Pongo abelii (Sumatran orangutan).